Consider the following 582-residue polypeptide: Solute carrier family 15 member 3 (582 aa).

A disordered region spans residues 1-20 (MSALRAEQQPSRSGERQPLV). 4 consecutive transmembrane segments (helical) span residues 33–53 (TAAA…FGVT), 77–97 (LLFL…ADVY), 102–122 (LAIS…LTTI), and 155–175 (PYCA…ASSV). N178 carries N-linked (GlcNAc...) asparagine glycosylation. A helical membrane pass occupies residues 201–221 (WFYWSINLGAILSLLVVAFIE). N223 carries an N-linked (GlcNAc...) asparagine glycan. Transmembrane regions (helical) follow at residues 232-252 (IIVG…PVFI) and 312-332 (FQVL…WMVY). N-linked (GlcNAc...) asparagine glycosylation is present at N357. 2 helical membrane-spanning segments follow: residues 371–391 (IPEA…VPVK) and 409–429 (LQKM…AGVL). Residue N440 is glycosylated (N-linked (GlcNAc...) asparagine). Helical transmembrane passes span 466–485 (YLLI…EFAY), 498–518 (GIFF…VALL), and 541–561 (LYFF…LWIA). N-linked (GlcNAc...) asparagine glycosylation is present at N575.

This sequence belongs to the major facilitator superfamily. Proton-dependent oligopeptide transporter (POT/PTR) (TC 2.A.17) family. In terms of tissue distribution, abundant expression in lung, spleen and thymus, and detected faintly in brain, liver, adrenal gland and heart at protein level.

The protein resides in the lysosome membrane. It is found in the endosome membrane. The enzyme catalyses N-acetyl-D-muramoyl-L-alanyl-D-isoglutamine(out) + n H(+)(out) = N-acetyl-D-muramoyl-L-alanyl-D-isoglutamine(in) + n H(+)(in). The catalysed reaction is glycylglycylglycine(out) + n H(+)(out) = glycylglycylglycine(in) + n H(+)(in). It catalyses the reaction carnosine(out) + n H(+)(out) = carnosine(in) + n H(+)(in). It carries out the reaction L-histidine(out) + n H(+)(out) = L-histidine(in) + n H(+)(in). Functionally, proton-coupled amino-acid transporter that transports free histidine and certain di- and tripeptides, and is involved in innate immune response. Also able to transport carnosine. Involved in the detection of microbial pathogens by toll-like receptors (TLRs) and NOD-like receptors (NLRs), probably by mediating transport of bacterial peptidoglycans across the endolysosomal membrane: catalyzes the transport of certain bacterial peptidoglycans, such as muramyl dipeptide (MDP), the NOD2 ligand. The sequence is that of Solute carrier family 15 member 3 (Slc15a3) from Rattus norvegicus (Rat).